The chain runs to 288 residues: Bifunctional protein FolD (288 aa).

Residues Gly-166–Ser-168 and Ile-232 each bind NADP(+).

This sequence belongs to the tetrahydrofolate dehydrogenase/cyclohydrolase family. In terms of assembly, homodimer.

It catalyses the reaction (6R)-5,10-methylene-5,6,7,8-tetrahydrofolate + NADP(+) = (6R)-5,10-methenyltetrahydrofolate + NADPH. The catalysed reaction is (6R)-5,10-methenyltetrahydrofolate + H2O = (6R)-10-formyltetrahydrofolate + H(+). Its pathway is one-carbon metabolism; tetrahydrofolate interconversion. Its function is as follows. Catalyzes the oxidation of 5,10-methylenetetrahydrofolate to 5,10-methenyltetrahydrofolate and then the hydrolysis of 5,10-methenyltetrahydrofolate to 10-formyltetrahydrofolate. The sequence is that of Bifunctional protein FolD from Cronobacter sakazakii (strain ATCC BAA-894) (Enterobacter sakazakii).